A 103-amino-acid chain; its full sequence is Small ribosomal subunit protein uS10 (103 aa).

Belongs to the universal ribosomal protein uS10 family. In terms of assembly, part of the 30S ribosomal subunit.

Functionally, involved in the binding of tRNA to the ribosomes. This chain is Small ribosomal subunit protein uS10, found in Salinibacter ruber (strain DSM 13855 / M31).